A 309-amino-acid chain; its full sequence is Homoserine kinase (309 aa).

91 to 101 (PIGSGLGSSAC) contributes to the ATP binding site.

This sequence belongs to the GHMP kinase family. Homoserine kinase subfamily.

The protein localises to the cytoplasm. It catalyses the reaction L-homoserine + ATP = O-phospho-L-homoserine + ADP + H(+). Its pathway is amino-acid biosynthesis; L-threonine biosynthesis; L-threonine from L-aspartate: step 4/5. Catalyzes the ATP-dependent phosphorylation of L-homoserine to L-homoserine phosphate. The chain is Homoserine kinase from Salmonella paratyphi B (strain ATCC BAA-1250 / SPB7).